The sequence spans 824 residues: Tuftelin-interacting protein 11 (824 aa).

A disordered region spans residues 1–135 (MSMSHLYGKD…RTFAGGIKSN (135 aa)). The segment covering 11 to 25 (EDSDGVEMENFEITD) has biased composition (acidic residues). Basic and acidic residues-rich tracts occupy residues 41-61 (QTKEEATYGMWAEHDSDDERP) and 85-114 (PAAEEKSDSDSDSETQSRRENFPKDFEAKK). Over residues 122 to 135 (KPSQRTFAGGIKSN) the composition is skewed to polar residues. A G-patch domain is found at 145–191 (TKGIGQKLLQKMGYMPGRGLGKNAQGIIAPIEAKQRRGKGAVGAYGS).

Belongs to the TFP11/STIP family. As to quaternary structure, identified in the spliceosome C complex.

Its subcellular location is the nucleus. Involved in pre-mRNA splicing, specifically in spliceosome disassembly during late-stage splicing events. This Xenopus laevis (African clawed frog) protein is Tuftelin-interacting protein 11 (tfip11).